A 591-amino-acid polypeptide reads, in one-letter code: Aspartate--tRNA ligase (591 aa).

Glu171 lines the L-aspartate pocket. The aspartate stretch occupies residues 195–198; the sequence is QLFK. L-aspartate is bound at residue Arg217. ATP contacts are provided by residues 217–219 and Gln226; that span reads RDE. His448 is an L-aspartate binding site. Glu482 lines the ATP pocket. Arg489 is an L-aspartate binding site. 534 to 537 is a binding site for ATP; the sequence is GLDR.

The protein belongs to the class-II aminoacyl-tRNA synthetase family. Type 1 subfamily. Homodimer.

Its subcellular location is the cytoplasm. The catalysed reaction is tRNA(Asp) + L-aspartate + ATP = L-aspartyl-tRNA(Asp) + AMP + diphosphate. In terms of biological role, catalyzes the attachment of L-aspartate to tRNA(Asp) in a two-step reaction: L-aspartate is first activated by ATP to form Asp-AMP and then transferred to the acceptor end of tRNA(Asp). The polypeptide is Aspartate--tRNA ligase (Aliivibrio salmonicida (strain LFI1238) (Vibrio salmonicida (strain LFI1238))).